The primary structure comprises 129 residues: Glycophorin-A (129 aa).

Positions 1–17 (MYEKIVIVLLLSGYIST) are cleaved as a signal peptide. Pyrrolidone carboxylic acid is present on glutamine 18. The Extracellular portion of the chain corresponds to 18–82 (QDVTEIIPHE…QLVHIFSEPV (65 aa)). O-linked (GalNAc...) serine glycosylation is found at serine 29 and serine 30. Residue threonine 34 is glycosylated (O-linked (GalNAc...) threonine). An O-linked (GalNAc...) serine glycan is attached at serine 40. 2 O-linked (GalNAc...) threonine glycosylation sites follow: threonine 41 and threonine 48. Residue serine 56 is glycosylated (O-linked (GalNAc...) serine). Residues 83 to 103 (IIGIIYAVMLGIIITILSIAF) traverse the membrane as a helical segment. Over 104–129 (CIGQLTKKSSLPAQVASPEDVDPEVL) the chain is Cytoplasmic.

The protein belongs to the glycophorin-A family. As to quaternary structure, homodimer. Component of the ankyrin-1 complex in the erythrocyte, composed of ANK1, RHCE, RHAG, SLC4A1, EPB42, GYPA, GYPB and AQP1. Interacts with SLC4A1; a GYPA monomer is bound at each end of the SLC4A1 dimer forming a heterotetramer.

The protein localises to the membrane. Its function is as follows. Component of the ankyrin-1 complex, a multiprotein complex involved in the stability and shape of the erythrocyte membrane. Glycophorin A is the major intrinsic membrane protein of the erythrocyte. The N-terminal glycosylated segment, which lies outside the erythrocyte membrane, has MN blood group receptors. Appears to be important for the function of SLC4A1 and is required for high activity of SLC4A1. May be involved in translocation of SLC4A1 to the plasma membrane. The chain is Glycophorin-A from Canis lupus familiaris (Dog).